Here is a 658-residue protein sequence, read N- to C-terminus: Transcription factor E2-alpha (658 aa).

Disordered stretches follow at residues serine 42–tyrosine 82, serine 140–asparagine 191, asparagine 276–threonine 313, aspartate 331–glycine 372, valine 460–valine 558, and glutamate 628–methionine 658. A Nuclear localization signal motif is present at residues proline 173–valine 179. The span at asparagine 276–aspartate 303 shows a compositional bias: polar residues. The segment covering serine 333–proline 344 has biased composition (low complexity). Positions valine 345–glycine 355 are enriched in polar residues. The span at proline 493–serine 507 shows a compositional bias: basic and acidic residues. Over residues glutamine 533–leucine 544 the composition is skewed to acidic residues. The span at glutamine 548–valine 558 shows a compositional bias: basic and acidic residues. Positions glutamate 555 to leucine 608 constitute a bHLH domain.

Homodimer. Heterodimer; efficient DNA binding requires dimerization with another bHLH protein. Interacts with tgfb1i1.

The protein localises to the nucleus. In terms of biological role, transcriptional regulator involved in the initiation of neuronal differentiation and mesenchymal to epithelial transition. Heterodimers between tcf3 and tissue-specific basic helix-loop-helix (bHLH) proteins play major roles in determining tissue-specific cell fate during embryogenesis, like muscle or early B-cell differentiation. Together with tcf15, required for the mesenchymal to epithelial transition. Dimers bind DNA on E-box motifs: 5'-CANNTG-3'. The protein is Transcription factor E2-alpha (tcf3) of Xenopus laevis (African clawed frog).